A 182-amino-acid polypeptide reads, in one-letter code: R-phycoerythrin subunit beta (182 aa).

Residue Cys-82 coordinates (2R,3E)-phycoerythrobilin.

This sequence belongs to the phycobiliprotein family. Homodimer. In terms of processing, contains one covalently linked phycoerythrobilin chromophore.

Functionally, green-light absorbing phycoerythrin of unknown function. The chain is R-phycoerythrin subunit beta (cpeB) from Prochlorococcus marinus (strain SARG / CCMP1375 / SS120).